The sequence spans 396 residues: Ribosomal RNA large subunit methyltransferase I (396 aa).

Residues 2 to 81 (SVRLVLAKGR…ESIDIAFFSR (80 aa)) form the PUA domain.

This sequence belongs to the methyltransferase superfamily. RlmI family.

The protein localises to the cytoplasm. It catalyses the reaction cytidine(1962) in 23S rRNA + S-adenosyl-L-methionine = 5-methylcytidine(1962) in 23S rRNA + S-adenosyl-L-homocysteine + H(+). In terms of biological role, specifically methylates the cytosine at position 1962 (m5C1962) of 23S rRNA. The chain is Ribosomal RNA large subunit methyltransferase I from Escherichia coli O157:H7.